The chain runs to 274 residues: Protein LIKE COV 3 (274 aa).

Topologically, residues 1-60 are cytoplasmic; that stretch reads METRERDLERLIPMHKSGASPRDVVLSVPPSPLASPIHVAGKEAIYKVIRSWASKKFMTG. Residues 61 to 81 form a helical membrane-spanning segment; that stretch reads CVILLPIAVTFYFTWWFIHFV. The Extracellular portion of the chain corresponds to 82–93; that stretch reads DGFFSPIYTHLG. A helical transmembrane segment spans residues 94–114; sequence INMFGLGFVTSITFIFMVGVF. Residues 115–274 lie on the Cytoplasmic side of the membrane; it reads MSSWLGASVL…VCLSLVLAWT (160 aa).

Belongs to the plant COV1 protein family.

It localises to the membrane. The sequence is that of Protein LIKE COV 3 from Arabidopsis thaliana (Mouse-ear cress).